We begin with the raw amino-acid sequence, 531 residues long: MASSRQDYIAPWWTYWLHNFPHLNFNFQTVDNTFKPEDASYQQSLVFLACVSAVALGLCLLLLSVYLTCLCCCRREEDEEVKRPDTCCVTWAAVITGLVICSAVGVGFYGNSETNDGVYQLTYSIYNANHTLGGIGSMVGNSLGSMQVGLKEHLERLDEIFSPRGDYTQTLRFMQQMADNIIQQLTAMPETRKVQVDLAAIADRTAFIEYYRWLTYLLLLILDLVICLLACLALAKQSRWLLTVIMVCGMLTLIMSWASLGAGTATAVGTSDFCVSPDKYIVNQTKGTLSSDIVHYYLYCSQSLPNPFQQSLTIFQRSLTTMQIQVQGLLQFAVVVFPTAEKDLLGIQRLLNSSEFNLHQLTALLDCRSLHKDYLEALLGVCYDGVEGLLYLCLFSLLAACAFCALLCAVPRAWMLIAIRDRDYDDIDEEDPFNPTRRFNAYNPSRAQVHSFCSYSSSMGSQTSLQPPLQATSSTPEYMNQSMLFERNPRYENVPLIGSGSPPPSYSPSMRTTYLSMTDAQIRHFGTDFQV.

Residues 1–44 (MASSRQDYIAPWWTYWLHNFPHLNFNFQTVDNTFKPEDASYQQS) lie on the Extracellular side of the membrane. Residues 45–65 (LVFLACVSAVALGLCLLLLSV) traverse the membrane as a helical segment. Topologically, residues 66-87 (YLTCLCCCRREEDEEVKRPDTC) are cytoplasmic. The helical transmembrane segment at 88–108 (CVTWAAVITGLVICSAVGVGF) threads the bilayer. The Extracellular segment spans residues 109–213 (YGNSETNDGV…RTAFIEYYRW (105 aa)). N-linked (GlcNAc...) asparagine glycosylation is present at N129. The helical transmembrane segment at 214–234 (LTYLLLLILDLVICLLACLAL) threads the bilayer. Topologically, residues 235–239 (AKQSR) are cytoplasmic. The chain crosses the membrane as a helical span at residues 240-260 (WLLTVIMVCGMLTLIMSWASL). Over 261–389 (GAGTATAVGT…GVCYDGVEGL (129 aa)) the chain is Extracellular. 2 N-linked (GlcNAc...) asparagine glycosylation sites follow: N283 and N352. The helical transmembrane segment at 390–410 (LYLCLFSLLAACAFCALLCAV) threads the bilayer. Residues 411–531 (PRAWMLIAIR…IRHFGTDFQV (121 aa)) lie on the Cytoplasmic side of the membrane.

Belongs to the tweety family.

It is found in the cell membrane. In terms of biological role, probable large-conductance Ca(2+)-activated chloride channel. The chain is Protein tweety homolog 2-like (ttyh2l) from Danio rerio (Zebrafish).